The sequence spans 197 residues: Xanthine phosphoribosyltransferase (197 aa).

Xanthine-binding residues include leucine 20 and asparagine 27. A 5-phospho-alpha-D-ribose 1-diphosphate-binding site is contributed by 128–132 (ANGQA). Lysine 156 lines the xanthine pocket.

It belongs to the purine/pyrimidine phosphoribosyltransferase family. Xpt subfamily. In terms of assembly, homodimer.

The protein resides in the cytoplasm. It carries out the reaction XMP + diphosphate = xanthine + 5-phospho-alpha-D-ribose 1-diphosphate. Its pathway is purine metabolism; XMP biosynthesis via salvage pathway; XMP from xanthine: step 1/1. Functionally, converts the preformed base xanthine, a product of nucleic acid breakdown, to xanthosine 5'-monophosphate (XMP), so it can be reused for RNA or DNA synthesis. This Bacillus cereus (strain ATCC 14579 / DSM 31 / CCUG 7414 / JCM 2152 / NBRC 15305 / NCIMB 9373 / NCTC 2599 / NRRL B-3711) protein is Xanthine phosphoribosyltransferase.